We begin with the raw amino-acid sequence, 429 residues long: Enolase (429 aa).

Residue Gln-167 participates in (2R)-2-phosphoglycerate binding. The active-site Proton donor is Glu-209. Asp-246, Glu-289, and Asp-316 together coordinate Mg(2+). 4 residues coordinate (2R)-2-phosphoglycerate: Lys-341, Arg-370, Ser-371, and Lys-392. Lys-341 (proton acceptor) is an active-site residue.

The protein belongs to the enolase family. In terms of assembly, component of the RNA degradosome, a multiprotein complex involved in RNA processing and mRNA degradation. Requires Mg(2+) as cofactor.

The protein resides in the cytoplasm. Its subcellular location is the secreted. It is found in the cell surface. It catalyses the reaction (2R)-2-phosphoglycerate = phosphoenolpyruvate + H2O. The protein operates within carbohydrate degradation; glycolysis; pyruvate from D-glyceraldehyde 3-phosphate: step 4/5. Functionally, catalyzes the reversible conversion of 2-phosphoglycerate (2-PG) into phosphoenolpyruvate (PEP). It is essential for the degradation of carbohydrates via glycolysis. This chain is Enolase, found in Pseudomonas entomophila (strain L48).